The chain runs to 597 residues: MREVNFSIPNVNKASVNITTTLYDRRALDCTSTLPLINSLNHLAYLTTSSARIRDILTVDGGIERLVCILKEGRSGDLMEMWKWSLAFQCVVNIGVRGSESVRTRVVEADMVPVIATILDNYIKVVDKARARADSESHKQSSRHHPKSVPAPSDSSGRPAFLEQSSASENRTSRRQAPPPSIEIPPQPLFIDVTSPPRVPMTSPPERSTFGQDVHNHRTNDTRYAHPSHRHRTMQPLATALPPMDTADGFGLRPVRDNERLPSMLPALHTGLTSQPDSPTTPNAPVQPRSIAQATHARHRPSLRQQLSASGESDDGNGESSTMEDESTPAETAEPIVGLQNRMDIDDVGNREAIIGGVSESHDLTVTDPSEGQEAETFNITHRSTVDGSMINTDNAQNNAALGLSPAQAADTATSPALVPSPYSLYFRDRSTAAAQGVLTTMPRDEDVLMSLQLLAYVSKYCNLRSYFQNSHFVPKLKIDRELQMLEEGTSPIEPAEEEDEYLLPDDVNIFPLVEKFTVRHHSKDMQYWACVVMRNLCRKDEARGGIRQCAYYKCGKWEETARQFAKCRRCRRTKYCSKDCQKAAWVYHRHWCHSTP.

Disordered stretches follow at residues 133–230, 268–287, and 292–341; these read ADSE…PSHR, LHTG…APVQ, and AQAT…GLQN. Over residues 177–188 the composition is skewed to pro residues; the sequence is APPPSIEIPPQP. The span at 214–224 shows a compositional bias: basic and acidic residues; sequence VHNHRTNDTRY. Over residues 271-284 the composition is skewed to polar residues; that stretch reads GLTSQPDSPTTPNA. Residues 312-328 show a composition bias toward acidic residues; it reads ESDDGNGESSTMEDEST. An MYND-type; degenerate zinc finger spans residues 552–593; it reads YYKCGKWEETARQFAKCRRCRRTKYCSKDCQKAAWVYHRHWC. Positions 568, 571, 589, and 593 each coordinate Zn(2+).

This sequence belongs to the MUB1/samB family.

The protein localises to the cytoplasm. In terms of biological role, involved in determination of the onset of polarized growth and morphogenesis. Plays a role in the regulation of branching in hyphae and spore formation. The chain is MYND-type zinc finger protein samB (samB) from Aspergillus clavatus (strain ATCC 1007 / CBS 513.65 / DSM 816 / NCTC 3887 / NRRL 1 / QM 1276 / 107).